The sequence spans 188 residues: Elongation factor P (188 aa).

Lysine 34 bears the N6-(3,6-diaminohexanoyl)-5-hydroxylysine mark.

Belongs to the elongation factor P family. In terms of processing, is beta-lysylated on the epsilon-amino group of Lys-34 by the combined action of EpmA and EpmB, and then hydroxylated on the C5 position of the same residue by EpmC. Lysylation is critical for the stimulatory effect of EF-P on peptide-bond formation. The lysylation moiety would extend toward the peptidyltransferase center and stabilize the terminal 3-CCA end of the tRNA. The hydroxylation of the C5 position on Lys-34 would allow additional potential stabilizing hydrogen-bond interactions with the P-tRNA.

Its subcellular location is the cytoplasm. It functions in the pathway protein biosynthesis; polypeptide chain elongation. In terms of biological role, involved in peptide bond synthesis. Alleviates ribosome stalling that occurs when 3 or more consecutive Pro residues or the sequence PPG is present in a protein, possibly by augmenting the peptidyl transferase activity of the ribosome. Modification of Lys-34 is required for alleviation. This Salmonella arizonae (strain ATCC BAA-731 / CDC346-86 / RSK2980) protein is Elongation factor P.